A 247-amino-acid chain; its full sequence is Neurotrophic factor BDNF precursor form (247 aa).

The signal sequence occupies residues methionine 1–alanine 18. A propeptide spanning residues alanine 19–arginine 128 is cleaved from the precursor. Asparagine 121 carries an N-linked (GlcNAc...) asparagine glycan. Cystine bridges form between cysteine 141–cysteine 208, cysteine 186–cysteine 237, and cysteine 196–cysteine 239.

Belongs to the NGF-beta family. In terms of assembly, monomers and homodimers. Binds to NTRK2/TRKB. Can form heterodimers with other neurotrophin family members, such as NTF3 and NTF4 (in vitro), but the physiological relevance of this is not clear. BDNF precursor form: interacts with the heterodimer formed by NGFR and SORCS2. Post-translationally, N-glycosylated and glycosulfated, contrary to mature BDNF. Mature BDNF is produced by proteolytic removal of the propeptide, catalyzed by a FURIN family member. In addition, the precursor form is proteolytically cleaved within the propeptide, but this is not an obligatory intermediate for the production of mature BDNF. Can be converted into mature BDNF by plasmin (PLG). As to expression, detected in blood plasma and in saliva (at protein level). Brain. Highly expressed in hippocampus, amygdala, cerebral cortex and cerebellum. Also expressed in heart, lung, skeletal muscle, testis, prostate and placenta.

The protein resides in the secreted. Its function is as follows. Important signaling molecule that activates signaling cascades downstream of NTRK2. During development, promotes the survival and differentiation of selected neuronal populations of the peripheral and central nervous systems. Participates in axonal growth, pathfinding and in the modulation of dendritic growth and morphology. Major regulator of synaptic transmission and plasticity at adult synapses in many regions of the CNS. The versatility of BDNF is emphasized by its contribution to a range of adaptive neuronal responses including long-term potentiation (LTP), long-term depression (LTD), certain forms of short-term synaptic plasticity, as well as homeostatic regulation of intrinsic neuronal excitability. Functionally, important signaling molecule that activates signaling cascades downstream of NTRK2. Activates signaling cascades via the heterodimeric receptor formed by NGFR and SORCS2. Signaling via NGFR and SORCS2 plays a role in synaptic plasticity and long-term depression (LTD). Binding to NGFR and SORCS2 promotes neuronal apoptosis. Promotes neuronal growth cone collapse. In Homo sapiens (Human), this protein is Neurotrophic factor BDNF precursor form.